Consider the following 21-residue polypeptide: C-phycocyanin alpha subunit (21 aa).

It belongs to the phycobiliprotein family. Heterodimer of an alpha and a beta subunit, which further assembles into trimers and the trimers into hexamers. In terms of processing, contains one covalently linked bilin chromophore.

It is found in the cellular thylakoid membrane. Light-harvesting photosynthetic bile pigment-protein from the phycobiliprotein complex (phycobilisome, PBS). Phycocyanin is the major phycobiliprotein in the PBS rod. This Anabaena sp. (strain L31) protein is C-phycocyanin alpha subunit.